Here is a 322-residue protein sequence, read N- to C-terminus: HPr kinase/phosphorylase (322 aa).

Catalysis depends on residues histidine 146 and lysine 167. Position 161-168 (161-168) interacts with ATP; it reads GDSGLGKS. Residue serine 168 coordinates Mg(2+). Aspartate 185 (proton acceptor; for phosphorylation activity. Proton donor; for dephosphorylation activity) is an active-site residue. Positions 209–218 are important for the catalytic mechanism of both phosphorylation and dephosphorylation; sequence LEVRGLGLLD. Residue glutamate 210 coordinates Mg(2+). The active site involves arginine 250. The tract at residues 271-276 is important for the catalytic mechanism of dephosphorylation; that stretch reads QVAAGR.

It belongs to the HPrK/P family. In terms of assembly, homohexamer. Requires Mg(2+) as cofactor.

The catalysed reaction is [HPr protein]-L-serine + ATP = [HPr protein]-O-phospho-L-serine + ADP + H(+). The enzyme catalyses [HPr protein]-O-phospho-L-serine + phosphate + H(+) = [HPr protein]-L-serine + diphosphate. Its function is as follows. Catalyzes the ATP- as well as the pyrophosphate-dependent phosphorylation of a specific serine residue in HPr, a phosphocarrier protein of the phosphoenolpyruvate-dependent sugar phosphotransferase system (PTS). HprK/P also catalyzes the pyrophosphate-producing, inorganic phosphate-dependent dephosphorylation (phosphorolysis) of seryl-phosphorylated HPr (P-Ser-HPr). The polypeptide is HPr kinase/phosphorylase (Burkholderia multivorans (strain ATCC 17616 / 249)).